The chain runs to 525 residues: Histidine-rich glycoprotein (525 aa).

Positions 1–18 (MKVLTTALLLVTLQCSHA) are cleaved as a signal peptide. The Cystatin 1 domain maps to 19 to 122 (LSPTNCDASE…ESQDLSVNGY (104 aa)). Cystine bridges form between C24-C504, C78-C89, C103-C124, C201-C414, and C216-C239. The tract at residues 41 to 84 (GRRSGYVFELLRVSDAHLDRAGTATVYYLALDVIESDCWVLSTK) is interaction with ATP5F1A. N-linked (GlcNAc...) asparagine glycosylation is found at N112, N123, and N200. A Cystatin 2 domain is found at 135-240 (NTKDSPVLLD…TPDSIDINCE (106 aa)). Residues 273–447 (GSRDHHHTHK…SRKRGPGKGL (175 aa)) are disordered. The segment covering 293–303 (EGKDNSDRPRL) has biased composition (basic and acidic residues). N-linked (GlcNAc...) asparagine glycosylation is found at N322 and N330. Basic residues predominate over residues 339-404 (HGHRPHGHHP…GHHPHGHHPH (66 aa)). The segment at 345 to 379 (GHHPHSHHPPGHHSHGHHPHGHHPHSHHSHGHHPP) is necessary for endothelial cell focal adhesions and anti-angiogenic activities. A Phosphoserine modification is found at S438.

As to quaternary structure, interacts with THBS1 (via the TSP type I repeats); the interaction blocks the antiangiogenic effect of THBS1 with CD36. Interacts with HPSE; the interaction is enhanced at acidic pH, partially inhibits binding of HPSE to cell surface receptors and modulates its enzymatic activity. Interacts (via the HRR domain) with TMP1; the interaction partially mediates the antiangiogenic properties of HRG. Interacts with kappa and lambda light chains of IgG molecules. Interacts with ATP5F1A; the interaction occurs on the surface of T-cells and alters their cell morphology in concert with CONA. Binds IgG molecules containing kappa and lambda light chains and inhibits the formation of insoluble immunoglobulin complexes. Interacts with F12; the interaction, which is enhanced in the presence of zinc ions and inhibited by heparin-binding to HRG, inhibits factor XII autoactivation and contact-initiated coagulation. Interacts with PLG (via its Kringle domains); the interaction tethers PLG to the cell surface and enhances its activation. Interacts (via the HRR domain) with TPM1; the interaction appears to contribute to the antiangiogenic properties of the HRR domain. Interacts with THBS2; the interaction blocks the antiangiogenic effect of THBS2 with CD36. Zn(2+) is required as a cofactor. In terms of processing, proteolytic cleavage produces several HRG fragments which are mostly disulfide-linked and, therefore, not released. Cleavage by plasmin is inhibited in the presence of heparin, zinc ions or in an acidic environment. Cleavage reduces binding of HRG to heparan sulfate, but enhances the ability of HRG to bind and tether plasminogen to the cell surface. On platelet activation, releases a 33 kDa antiangiogenic peptide which encompasses the HRR. Also cleaved in the C-terminal by plasmin. N-glycosylated. In terms of tissue distribution, expressed in liver, blood plasma, serum and in platelets. Also present in fibrin clots, wound fluid from acute wounds and chronic leg ulcers.

It is found in the secreted. Plasma glycoprotein that binds a number of ligands such as heme, heparin, heparan sulfate, thrombospondin, plasminogen, and divalent metal ions. Binds heparin and heparin/glycosaminoglycans in a zinc-dependent manner. Binds heparan sulfate on the surface of liver, lung, kidney and heart endothelial cells. Binds to N-sulfated polysaccharide chains on the surface of liver endothelial cells. Inhibits rosette formation. Acts as an adapter protein and is implicated in regulating many processes such as immune complex and pathogen clearance, cell chemotaxis, cell adhesion, angiogenesis, coagulation and fibrinolysis. Mediates clearance of necrotic cells through enhancing the phagocytosis of necrotic cells in a heparan sulfate-dependent pathway. This process can be regulated by the presence of certain HRG ligands such as heparin and zinc ions. Binds to IgG subclasses of immunoglobins containing kappa and lambda light chains with different affinities regulating their clearance and inhibiting the formation of insoluble immune complexes. Tethers plasminogen to the cell surface. Binds T-cells and alters the cell morphology. Acts as a regulator of the vascular endothelial growth factor (VEGF) signaling pathway; inhibits endothelial cell motility by reducing VEGF-induced complex formation between PXN/paxillin and ILK/integrin-linked protein kinase and by promoting inhibition of VEGF-induced tyrosine phosphorylation of focal adhesion kinases and alpha-actinins in endothelial cells. Also plays a role in the regulation of tumor angiogenesis and tumor immune surveillance. Normalizes tumor vessels and promotes antitumor immunity by polarizing tumor-associated macrophages, leading to decreased tumor growth and metastasis. Modulates angiogenesis by blocking the CD6-mediated antiangiongenic effect of thrombospondins, THBS1 and THBS2. The polypeptide is Histidine-rich glycoprotein (Hrg) (Mus musculus (Mouse)).